Reading from the N-terminus, the 21-residue chain is Fibrinogen beta chain (21 aa).

Pyrrolidone carboxylic acid is present on Q1. The span at 1–10 (QFPTDYDEGQ) shows a compositional bias: acidic residues. The interval 1 to 21 (QFPTDYDEGQDDRPKLGLGAR) is disordered. The O-linked (GalNAc...) threonine glycan is linked to T4. Residue Y6 is modified to Sulfotyrosine.

Heterohexamer; disulfide linked. Contains 2 sets of 3 non-identical chains (alpha, beta and gamma). The 2 heterotrimers are in head to head conformation with the N-termini in a small central domain. Post-translationally, conversion of fibrinogen to fibrin is triggered by thrombin, which cleaves fibrinopeptides A and B from alpha and beta chains, and thus exposes the N-terminal polymerization sites responsible for the formation of the soft clot.

Its subcellular location is the secreted. Its function is as follows. Cleaved by the protease thrombin to yield monomers which, together with fibrinogen alpha (FGA) and fibrinogen gamma (FGG), polymerize to form an insoluble fibrin matrix. Fibrin has a major function in hemostasis as one of the primary components of blood clots. In addition, functions during the early stages of wound repair to stabilize the lesion and guide cell migration during re-epithelialization. Was originally thought to be essential for platelet aggregation, based on in vitro studies using anticoagulated blood. However subsequent studies have shown that it is not absolutely required for thrombus formation in vivo. Enhances expression of SELP in activated platelets. Maternal fibrinogen is essential for successful pregnancy. Fibrin deposition is also associated with infection, where it protects against IFNG-mediated hemorrhage. May also facilitate the antibacterial immune response via both innate and T-cell mediated pathways. This is Fibrinogen beta chain (FGB) from Bubalus bubalis (Domestic water buffalo).